The chain runs to 298 residues: MKHYLITGGTGMIGSQLVKAIIQSDAHITILTRQDMTSSHPKISYVNWSQPNWENEIPDIDIVINLAGASLNKRWTKSYKQTIMLSRIQATQALFELFQNRKHKPEVLFNASAVGYYKPDLYRTYTELYKTLPFDFLSEVVYQWERMARQFETLGTRVVIGRFGMVLSNDGGALPMMKLPYDFYLGGKLGSGRQWYSWIHIDDLVRALLHTINTESARGVFNFTAPIVEHQNMFGYTLARVSHRPHHTWVPSLAIRLALGQMSTVVLDTQKVIPNKLQATHFKFKYPDLKIALEDLVH.

The protein belongs to the NAD(P)-dependent epimerase/dehydratase family. SDR39U1 subfamily.

The protein is Epimerase family protein SSP1921 of Staphylococcus saprophyticus subsp. saprophyticus (strain ATCC 15305 / DSM 20229 / NCIMB 8711 / NCTC 7292 / S-41).